A 457-amino-acid chain; its full sequence is Bifunctional protein GlmU (457 aa).

Residues 1 to 230 (MSKRYAVVLA…FEESLGVNDR (230 aa)) form a pyrophosphorylase region. UDP-N-acetyl-alpha-D-glucosamine is bound by residues 9 to 12 (LAAG), K23, Q73, and 78 to 79 (GT). D103 contributes to the Mg(2+) binding site. Residues G140, E155, N170, and N228 each coordinate UDP-N-acetyl-alpha-D-glucosamine. A Mg(2+)-binding site is contributed by N228. Positions 231–251 (IALAEASKLMQRRINENHMRN) are linker. An N-acetyltransferase region spans residues 252–457 (GVTLVNPENT…GYAKHLNHGK (206 aa)). Positions 333 and 351 each coordinate UDP-N-acetyl-alpha-D-glucosamine. The active-site Proton acceptor is H363. Residues Y366 and N377 each contribute to the UDP-N-acetyl-alpha-D-glucosamine site. Residues 386 to 387 (NY), A423, and R440 contribute to the acetyl-CoA site.

In the N-terminal section; belongs to the N-acetylglucosamine-1-phosphate uridyltransferase family. This sequence in the C-terminal section; belongs to the transferase hexapeptide repeat family. As to quaternary structure, homotrimer. The cofactor is Mg(2+).

It is found in the cytoplasm. It carries out the reaction alpha-D-glucosamine 1-phosphate + acetyl-CoA = N-acetyl-alpha-D-glucosamine 1-phosphate + CoA + H(+). It catalyses the reaction N-acetyl-alpha-D-glucosamine 1-phosphate + UTP + H(+) = UDP-N-acetyl-alpha-D-glucosamine + diphosphate. It functions in the pathway nucleotide-sugar biosynthesis; UDP-N-acetyl-alpha-D-glucosamine biosynthesis; N-acetyl-alpha-D-glucosamine 1-phosphate from alpha-D-glucosamine 6-phosphate (route II): step 2/2. The protein operates within nucleotide-sugar biosynthesis; UDP-N-acetyl-alpha-D-glucosamine biosynthesis; UDP-N-acetyl-alpha-D-glucosamine from N-acetyl-alpha-D-glucosamine 1-phosphate: step 1/1. It participates in bacterial outer membrane biogenesis; LPS lipid A biosynthesis. Catalyzes the last two sequential reactions in the de novo biosynthetic pathway for UDP-N-acetylglucosamine (UDP-GlcNAc). The C-terminal domain catalyzes the transfer of acetyl group from acetyl coenzyme A to glucosamine-1-phosphate (GlcN-1-P) to produce N-acetylglucosamine-1-phosphate (GlcNAc-1-P), which is converted into UDP-GlcNAc by the transfer of uridine 5-monophosphate (from uridine 5-triphosphate), a reaction catalyzed by the N-terminal domain. The protein is Bifunctional protein GlmU of Listeria innocua serovar 6a (strain ATCC BAA-680 / CLIP 11262).